Consider the following 424-residue polypeptide: Probable serine/threonine-protein kinase PBL12 (424 aa).

The region spanning 88–368 (FSRSNMLGEG…CEVVKVLESI (281 aa)) is the Protein kinase domain. Residues 94 to 102 (LGEGGFGPV) and lysine 123 contribute to the ATP site. The active-site Proton acceptor is aspartate 218.

The protein belongs to the protein kinase superfamily. Ser/Thr protein kinase family. As to expression, expressed specifically in roots.

It is found in the cell membrane. It carries out the reaction L-seryl-[protein] + ATP = O-phospho-L-seryl-[protein] + ADP + H(+). The enzyme catalyses L-threonyl-[protein] + ATP = O-phospho-L-threonyl-[protein] + ADP + H(+). In terms of biological role, may play a role in the signal transduction pathway of osmotic stress. May be involved in plant defense signaling. This Arabidopsis thaliana (Mouse-ear cress) protein is Probable serine/threonine-protein kinase PBL12.